The chain runs to 284 residues: Bifunctional protein FolD (284 aa).

Residues 165–167 (GRS), Ser-190, and Ile-231 contribute to the NADP(+) site.

This sequence belongs to the tetrahydrofolate dehydrogenase/cyclohydrolase family. In terms of assembly, homodimer.

The catalysed reaction is (6R)-5,10-methylene-5,6,7,8-tetrahydrofolate + NADP(+) = (6R)-5,10-methenyltetrahydrofolate + NADPH. It carries out the reaction (6R)-5,10-methenyltetrahydrofolate + H2O = (6R)-10-formyltetrahydrofolate + H(+). Its pathway is one-carbon metabolism; tetrahydrofolate interconversion. Catalyzes the oxidation of 5,10-methylenetetrahydrofolate to 5,10-methenyltetrahydrofolate and then the hydrolysis of 5,10-methenyltetrahydrofolate to 10-formyltetrahydrofolate. The chain is Bifunctional protein FolD from Streptococcus thermophilus (strain CNRZ 1066).